The chain runs to 266 residues: Apolipoprotein A-I (266 aa).

A signal peptide spans 1–18 (MKAVVLTLAVLFLTGSQA). 2 repeat units span residues 67-88 (LKLL…EQIG) and 89-110 (PVTQ…QEMS). A 10 X approximate tandem repeats region spans residues 67 to 266 (LKLLDNWDSL…DEAAKKLNTQ (200 aa)). Methionine sulfoxide is present on Met109. The 3; half-length repeat unit spans residues 111–121 (KDLEEVKQKVQ). 5 repeat units span residues 122–143 (PYLD…QKVA), 144–165 (PLGT…EKLT), 166–187 (PLGE…AHLA), 188–209 (PYSD…EGGS), and 210–231 (ASLA…EKAK). The 9; half-length repeat unit spans residues 232–242 (PALEDLRQGLL). Repeat unit 10 spans residues 243 to 266 (PVLESFKVSLLAAVDEAAKKLNTQ).

This sequence belongs to the apolipoprotein A1/A4/E family. As to quaternary structure, homodimer. Interacts with APOA1BP and CLU. Component of a sperm activating protein complex (SPAP), consisting of APOA1, an immunoglobulin heavy chain, an immunoglobulin light chain and albumin. Interacts with NDRG1. Interacts with SCGB3A2. Interacts with NAXE and YJEFN3. Post-translationally, glycosylated. Palmitoylated. In terms of processing, phosphorylation sites are present in the extracellular medium.

It localises to the secreted. Its function is as follows. Participates in the reverse transport of cholesterol from tissues to the liver for excretion by promoting cholesterol efflux from tissues and by acting as a cofactor for the lecithin cholesterol acyltransferase (LCAT). As part of the SPAP complex, activates spermatozoa motility. This chain is Apolipoprotein A-I (APOA1), found in Mustela putorius furo (European domestic ferret).